The following is a 1532-amino-acid chain: Glycogen debranching enzyme (1532 aa).

At S64 the chain carries Phosphoserine. Active-site residues include D526, H529, and D627.

Belongs to the glycogen debranching enzyme family. As to quaternary structure, monomer. Interacts with NHLRC1/malin. In terms of processing, the N-terminus is blocked. Ubiquitinated. Liver, kidney and lymphoblastoid cells express predominantly isoform 1; whereas muscle and heart express not only isoform 1, but also muscle-specific isoform mRNAs (isoforms 2, 3 and 4). Isoforms 5 and 6 are present in both liver and muscle.

The protein localises to the cytoplasm. The catalysed reaction is Transfers a segment of a (1-&gt;4)-alpha-D-glucan to a new position in an acceptor, which may be glucose or a (1-&gt;4)-alpha-D-glucan.. It catalyses the reaction Hydrolysis of (1-&gt;6)-alpha-D-glucosidic branch linkages in glycogen phosphorylase limit dextrin.. Multifunctional enzyme acting as 1,4-alpha-D-glucan:1,4-alpha-D-glucan 4-alpha-D-glycosyltransferase and amylo-1,6-glucosidase in glycogen degradation. The sequence is that of Glycogen debranching enzyme (AGL) from Homo sapiens (Human).